We begin with the raw amino-acid sequence, 266 residues long: Manganese catalase (266 aa).

Glutamate 35 is a Mn(2+) binding site. The Ca(2+) site is built by aspartate 57 and aspartate 61. Mn(2+) is bound by residues glutamate 66, histidine 69, glutamate 148, and histidine 181. Residues asparagine 218, serine 220, and glycine 222 each coordinate Ca(2+). Residues 243-266 (ENPEAMGGIPHIKPGDPRLHNHQG) are disordered. Over residues 255-266 (KPGDPRLHNHQG) the composition is skewed to basic and acidic residues.

The protein belongs to the manganese catalase family. As to quaternary structure, homohexamer. Ca(2+) serves as cofactor. The cofactor is Mn(2+).

The enzyme catalyses 2 H2O2 = O2 + 2 H2O. Its function is as follows. Catalyzes the decomposition of hydrogen peroxide into water and oxygen. The protein is Manganese catalase of Lactiplantibacillus plantarum (Lactobacillus plantarum).